Reading from the N-terminus, the 216-residue chain is Protein-L-isoaspartate O-methyltransferase (216 aa).

Serine 61 is a catalytic residue.

It belongs to the methyltransferase superfamily. L-isoaspartyl/D-aspartyl protein methyltransferase family.

The protein resides in the cytoplasm. It catalyses the reaction [protein]-L-isoaspartate + S-adenosyl-L-methionine = [protein]-L-isoaspartate alpha-methyl ester + S-adenosyl-L-homocysteine. Its function is as follows. Catalyzes the methyl esterification of L-isoaspartyl residues in peptides and proteins that result from spontaneous decomposition of normal L-aspartyl and L-asparaginyl residues. It plays a role in the repair and/or degradation of damaged proteins. This Geobacter metallireducens (strain ATCC 53774 / DSM 7210 / GS-15) protein is Protein-L-isoaspartate O-methyltransferase.